The chain runs to 848 residues: Nuclear cap-binding protein subunit 1 (848 aa).

The region spanning 8-228 is the MIF4G domain; sequence LLRIGEKGPE…DLLDRIQSLA (221 aa). A disordered region spans residues 767–786; sequence EDDKPSAMDVDSENGNPKKS.

It belongs to the NCBP1 family. In terms of assembly, component of the nuclear cap-binding complex (CBC), a heterodimer composed of ABH1/CBP80 and CBP20 that interacts with m7GpppG-capped RNA. Expressed in all tissues analyzed, including roots, stems, leaves and flowers.

Its subcellular location is the nucleus. The protein resides in the cytoplasm. In terms of biological role, component of the cap-binding complex (CBC), which binds cotranscriptionally to the 5'-cap of pre-mRNAs and is involved in various processes such as pre-mRNA splicing and RNA-mediated gene silencing (RNAi) by microRNAs (miRNAs). The CBC complex is involved in miRNA-mediated RNA interference and is required for primary miRNA processing. In the CBC complex, ABH1/CBP80 does not bind directly capped RNAs (m7GpppG-capped RNA) but is required to stabilize the movement of the N-terminal loop of CBP20 and lock the CBC into a high affinity cap-binding state with the cap structure. Involved in flowering regulation, possibly by regulating pre-mRNA splicing of FLC gene. Acts as a negative regulator of abscisic acid signaling in guard cells. This is Nuclear cap-binding protein subunit 1 (ABH1) from Arabidopsis thaliana (Mouse-ear cress).